The primary structure comprises 332 residues: Holliday junction branch migration complex subunit RuvB (332 aa).

The large ATPase domain (RuvB-L) stretch occupies residues 1-181 (MSRILDNEIM…FGITGHMEYY (181 aa)). Residues Leu-20, Arg-21, Gly-62, Lys-65, Thr-66, Thr-67, 128–130 (EDF), Arg-171, Tyr-181, and Arg-218 contribute to the ATP site. Residue Thr-66 coordinates Mg(2+). A small ATPAse domain (RuvB-S) region spans residues 182-252 (AHADLTEIVE…ITDKALTMLD (71 aa)). The tract at residues 255-332 (HEGLDYVDQK…EHLGYEYNEK (78 aa)) is head domain (RuvB-H). Positions 291, 310, 312, and 315 each coordinate DNA.

It belongs to the RuvB family. In terms of assembly, homohexamer. Forms an RuvA(8)-RuvB(12)-Holliday junction (HJ) complex. HJ DNA is sandwiched between 2 RuvA tetramers; dsDNA enters through RuvA and exits via RuvB. An RuvB hexamer assembles on each DNA strand where it exits the tetramer. Each RuvB hexamer is contacted by two RuvA subunits (via domain III) on 2 adjacent RuvB subunits; this complex drives branch migration. In the full resolvosome a probable DNA-RuvA(4)-RuvB(12)-RuvC(2) complex forms which resolves the HJ.

The protein resides in the cytoplasm. The enzyme catalyses ATP + H2O = ADP + phosphate + H(+). Functionally, the RuvA-RuvB-RuvC complex processes Holliday junction (HJ) DNA during genetic recombination and DNA repair, while the RuvA-RuvB complex plays an important role in the rescue of blocked DNA replication forks via replication fork reversal (RFR). RuvA specifically binds to HJ cruciform DNA, conferring on it an open structure. The RuvB hexamer acts as an ATP-dependent pump, pulling dsDNA into and through the RuvAB complex. RuvB forms 2 homohexamers on either side of HJ DNA bound by 1 or 2 RuvA tetramers; 4 subunits per hexamer contact DNA at a time. Coordinated motions by a converter formed by DNA-disengaged RuvB subunits stimulates ATP hydrolysis and nucleotide exchange. Immobilization of the converter enables RuvB to convert the ATP-contained energy into a lever motion, pulling 2 nucleotides of DNA out of the RuvA tetramer per ATP hydrolyzed, thus driving DNA branch migration. The RuvB motors rotate together with the DNA substrate, which together with the progressing nucleotide cycle form the mechanistic basis for DNA recombination by continuous HJ branch migration. Branch migration allows RuvC to scan DNA until it finds its consensus sequence, where it cleaves and resolves cruciform DNA. The chain is Holliday junction branch migration complex subunit RuvB from Streptococcus pneumoniae (strain CGSP14).